Reading from the N-terminus, the 275-residue chain is Multivesicular body subunit 12A (275 aa).

Residues 5 to 145 form the MABP domain; sequence STPITGLAWI…GLVFWCRKGS (141 aa). Positions 151–156 match the SH3-binding motif; that stretch reads PTPKPR. The UMA domain maps to 216 to 267; that stretch reads IDGIPFTIHPMFENTINNSSVAASDFRDLHIKTLSEIESEYNYGFVVEKTAA.

Belongs to the MVB12 family. Component of the ESCRT-I complex (endosomal sorting complex required for transport I).

It localises to the cytoplasm. It is found in the endosome. Its subcellular location is the late endosome membrane. Component of the ESCRT-I complex, a regulator of vesicular trafficking process. Required for the sorting of endocytic ubiquitinated cargos into multivesicular bodies. The sequence is that of Multivesicular body subunit 12A (mvb12a) from Xenopus laevis (African clawed frog).